The primary structure comprises 311 residues: Aspartate carbamoyltransferase catalytic subunit (311 aa).

Positions 59 and 60 each coordinate carbamoyl phosphate. Lys87 serves as a coordination point for L-aspartate. Arg109, His139, and Gln142 together coordinate carbamoyl phosphate. L-aspartate contacts are provided by Arg172 and Arg224. 2 residues coordinate carbamoyl phosphate: Ala265 and Pro266.

The protein belongs to the aspartate/ornithine carbamoyltransferase superfamily. ATCase family. Heterododecamer (2C3:3R2) of six catalytic PyrB chains organized as two trimers (C3), and six regulatory PyrI chains organized as three dimers (R2).

It catalyses the reaction carbamoyl phosphate + L-aspartate = N-carbamoyl-L-aspartate + phosphate + H(+). It participates in pyrimidine metabolism; UMP biosynthesis via de novo pathway; (S)-dihydroorotate from bicarbonate: step 2/3. Functionally, catalyzes the condensation of carbamoyl phosphate and aspartate to form carbamoyl aspartate and inorganic phosphate, the committed step in the de novo pyrimidine nucleotide biosynthesis pathway. The protein is Aspartate carbamoyltransferase catalytic subunit of Streptococcus pyogenes serotype M4 (strain MGAS10750).